The sequence spans 422 residues: MLRVRCLRGGSRGAEAAHFIGSRLGRAFTGWVQRSLQSTQAAAASQNRCAAEDKAQSPAPKECPVCSYNEWDPLEEVIVGRAENACVPPFSVEVKANTYEKYWGFYQKFGGESFPKDHVKKAIAEIEEMCNILKKEGVIVKRPDPIDWSVKYRTPDFESTGMYAAMPRDILLVVGNEIIEAPMAWRARFFEYRAYRRIIKDYFNNGAKWTTAPKPTMADELYDQDYPIRSVEDRHKLAAQGKFVTTEFEPCFDAADFIRAGRDIFVQRSQVTNYMGIEWMRRHLAPDYRVHVISFKDPNPMHIDTTFNIIGPGLVLSNPDRPCHQIELFKKAGWTVIHPPVPLIPDDHPLWMSSKWLSMNVLMLDEKRVMVDANETSIQKMFENLGISTIKVNIRHANSLGGGFHCWTCDIRRRGTLQSYFD.

A mitochondrion-targeting transit peptide spans 1-37 (MLRVRCLRGGSRGAEAAHFIGSRLGRAFTGWVQRSLQ). Active-site residues include aspartate 253 and histidine 302. Cysteine 406 functions as the Amidino-cysteine intermediate in the catalytic mechanism. Threonine 416 bears the Phosphothreonine mark.

The protein belongs to the amidinotransferase family. In terms of assembly, homodimer.

It localises to the mitochondrion inner membrane. It carries out the reaction L-arginine + glycine = guanidinoacetate + L-ornithine. The protein operates within amine and polyamine biosynthesis; creatine biosynthesis; creatine from L-arginine and glycine: step 1/2. In terms of biological role, catalyzes the biosynthesis of guanidinoacetate, the immediate precursor of creatine. Creatine plays a vital role in energy metabolism in muscle tissues. May play a role in embryonic and central nervous system development. In Gallus gallus (Chicken), this protein is Glycine amidinotransferase, mitochondrial.